The primary structure comprises 34 residues: NVCDGDACPDGVCRSGCTCDFNVAQRKDTCFYPQ.

Intrachain disulfides connect Cys3-Cys17, Cys8-Cys19, and Cys13-Cys30. Gln34 bears the Glutamine amide mark.

As to expression, expressed by the venom duct.

It localises to the secreted. This Polystira albida (White giant-turris) protein is Turripeptide Pal9a.